Consider the following 274-residue polypeptide: Large ribosomal subunit protein uL2cz/uL2cy (274 aa).

The tract at residues 225-274 is disordered; that stretch reads NPVDHPHGGGEGRAPIGRKKPTTPWGYPALGRRSRKRKKYSDSFILRRRK.

This sequence belongs to the universal ribosomal protein uL2 family. As to quaternary structure, part of the 50S ribosomal subunit.

It is found in the plastid. It localises to the chloroplast. The protein is Large ribosomal subunit protein uL2cz/uL2cy (rpl2-A) of Dioscorea elephantipes (Elephant's foot yam).